Consider the following 459-residue polypeptide: Argininosuccinate lyase (459 aa).

Belongs to the lyase 1 family. Argininosuccinate lyase subfamily.

The protein resides in the cytoplasm. It catalyses the reaction 2-(N(omega)-L-arginino)succinate = fumarate + L-arginine. It functions in the pathway amino-acid biosynthesis; L-arginine biosynthesis; L-arginine from L-ornithine and carbamoyl phosphate: step 3/3. This Lactococcus lactis subsp. cremoris (strain MG1363) protein is Argininosuccinate lyase.